A 150-amino-acid polypeptide reads, in one-letter code: Large ribosomal subunit protein bL9 (150 aa).

It belongs to the bacterial ribosomal protein bL9 family.

In terms of biological role, binds to the 23S rRNA. The polypeptide is Large ribosomal subunit protein bL9 (Streptococcus sanguinis (strain SK36)).